The chain runs to 88 residues: ATP synthase epsilon chain (88 aa).

The protein belongs to the ATPase epsilon chain family. As to quaternary structure, F-type ATPases have 2 components, CF(1) - the catalytic core - and CF(0) - the membrane proton channel. CF(1) has five subunits: alpha(3), beta(3), gamma(1), delta(1), epsilon(1). CF(0) has three main subunits: a, b and c.

Its subcellular location is the cell inner membrane. Produces ATP from ADP in the presence of a proton gradient across the membrane. This chain is ATP synthase epsilon chain (atpC), found in Chlorobium limicola.